Here is a 166-residue protein sequence, read N- to C-terminus: uncharacterized protein (166 aa).

To M.jannaschii MJ0992.

This is an uncharacterized protein from Methanocaldococcus jannaschii (strain ATCC 43067 / DSM 2661 / JAL-1 / JCM 10045 / NBRC 100440) (Methanococcus jannaschii).